A 458-amino-acid polypeptide reads, in one-letter code: MDQSNRYARLDLKEADLIAGGRHVLCAYIMKPKAGYGYLETAAHFAAESSTGTNVEVSTTDDFTRGVDALVYEIDPEKEIMKIAYPVELFDRNIIDGGAMLCSFLTLTIGNNQGMGDVEYAKMHDFYVPPCYLRLFDGPSMNIADMWRVLGRPVVDGGMVVGTIIKPKLGLRPKPFADACYEFWLGGDFIKNDEPQGNQTFAPLKETIRLVADAMKRAQDETGEAKLFSANITADDHYEMVARGEYILETFGENADHVAFLVDGYVTGPAAITTARRSFPRQFLHYHRAGHGAVTSPQSMRGYTAFVLSKMSRLQGASGIHTGTMGYGKMEGDASDKIMAYMLNDEAAQGPFYHQDWLGMKATTPIISGGMNALRLPGFFDNLGHSNVIQTSGGGAFGHLDGATAGAKSLRQSCDAWKAGVDLVTYAKSHRELARAFESFPNDADKLYPGWRVALGVN.

Asn-111 is a binding site for substrate. The active-site Proton acceptor is Lys-166. Lys-168 provides a ligand contact to substrate. Lys-191, Asp-193, and Glu-194 together coordinate Mg(2+). At Lys-191 the chain carries N6-carboxylysine. His-287 acts as the Proton acceptor in catalysis. Residues Arg-288, His-321, and Ser-368 each coordinate substrate.

The protein belongs to the RuBisCO large chain family. Type II subfamily. Homodimer. Requires Mg(2+) as cofactor.

The enzyme catalyses 2 (2R)-3-phosphoglycerate + 2 H(+) = D-ribulose 1,5-bisphosphate + CO2 + H2O. The catalysed reaction is D-ribulose 1,5-bisphosphate + O2 = 2-phosphoglycolate + (2R)-3-phosphoglycerate + 2 H(+). Its function is as follows. RuBisCO catalyzes two reactions: the carboxylation of D-ribulose 1,5-bisphosphate, the primary event in carbon dioxide fixation, as well as the oxidative fragmentation of the pentose substrate. Both reactions occur simultaneously and in competition at the same active site. The polypeptide is Ribulose bisphosphate carboxylase (cbbM) (Rhodobacter capsulatus (Rhodopseudomonas capsulata)).